A 541-amino-acid chain; its full sequence is uncharacterized protein (541 aa).

A signal peptide spans methionine 1 to serine 22. Cysteine 23 carries the N-palmitoyl cysteine lipid modification. A lipid anchor (S-diacylglycerol cysteine) is attached at cysteine 23. Disordered stretches follow at residues alanine 446–leucine 468 and lysine 480–glutamine 514. Over residues glycine 448–serine 460 the composition is skewed to low complexity. Residues lysine 480–aspartate 490 are compositionally biased toward basic and acidic residues.

The protein belongs to the MG185/MG260 family.

It is found in the cell membrane. This is an uncharacterized protein from Mycoplasma pneumoniae (strain ATCC 29342 / M129 / Subtype 1) (Mycoplasmoides pneumoniae).